The primary structure comprises 239 residues: Large ribosomal subunit protein uL2 (239 aa).

Belongs to the universal ribosomal protein uL2 family.

Its subcellular location is the cytoplasm. The chain is Large ribosomal subunit protein uL2 (RPL8) from Encephalitozoon cuniculi (strain GB-M1) (Microsporidian parasite).